An 849-amino-acid polypeptide reads, in one-letter code: Probable receptor-like protein kinase At1g30570 (849 aa).

Positions 1–28 (MSKLRKKYLEHLLCVLIFFTYVIGYGEA) are cleaved as a signal peptide. The Extracellular portion of the chain corresponds to 29-429 (QSKSFLVDCG…GHSVSDSKMR (401 aa)). Asn40, Asn57, Asn94, Asn122, Asn158, Asn268, Asn271, Asn305, and Asn343 each carry an N-linked (GlcNAc...) asparagine glycan. A helical membrane pass occupies residues 430–450 (IIWISVGAGIAIIIFFVFLGI). Residues 451-849 (LVVCLCKKRR…QTGSALHNSA (399 aa)) are Cytoplasmic-facing. The region spanning 520–793 (FDDGLAIGVG…GEVLWSLEYV (274 aa)) is the Protein kinase domain. ATP contacts are provided by residues 526–534 (IGVGGFGKV) and Lys548. Asp644 acts as the Proton acceptor in catalysis. Residues 810 to 849 (FSSSQAVEEAPESFTLPACSNQDSSETEQSQTGSALHNSA) form a disordered region. The span at 827–849 (ACSNQDSSETEQSQTGSALHNSA) shows a compositional bias: polar residues.

It belongs to the protein kinase superfamily. Ser/Thr protein kinase family.

It is found in the cell membrane. The chain is Probable receptor-like protein kinase At1g30570 from Arabidopsis thaliana (Mouse-ear cress).